A 248-amino-acid chain; its full sequence is Mitochondrial import inner membrane translocase subunit Tim21 (248 aa).

The N-terminal 18 residues, 1–18 (MICTFLRAVQYTEKLHRS), are a transit peptide targeting the mitochondrion. The interval 67–98 (TQGPSPRKAKEDGSKQVSVHRSQRGGTAVPTS) is disordered. The chain crosses the membrane as a helical span at residues 108 to 128 (FTYLIVVLFGISITGGLFYTI).

It belongs to the TIM21 family. Component of the TIM23 complex. Component of the MITRAC (mitochondrial translation regulation assembly intermediate of cytochrome c oxidase complex) complex, the core components of this complex being COA3/MITRAC12 and COX14. Interacts with COA3 and MT-CO1/COX1.

It is found in the mitochondrion membrane. Its function is as follows. Participates in the translocation of transit peptide-containing proteins across the mitochondrial inner membrane. Also required for assembly of mitochondrial respiratory chain complex I and complex IV as component of the MITRAC (mitochondrial translation regulation assembly intermediate of cytochrome c oxidase complex) complex. Probably shuttles between the presequence translocase and respiratory-chain assembly intermediates in a process that promotes incorporation of early nuclear-encoded subunits into these complexes. This is Mitochondrial import inner membrane translocase subunit Tim21 (TIMM21) from Homo sapiens (Human).